Here is a 120-residue protein sequence, read N- to C-terminus: Succinate dehydrogenase membrane anchor subunit (120 aa).

Residues Met-1 to His-17 lie on the Mitochondrial matrix side of the membrane. Residues Trp-18–Asp-38 form a helical membrane-spanning segment. Over Val-39 to Ser-63 the chain is Mitochondrial intermembrane. Residues Ile-64 to Ile-85 form a helical membrane-spanning segment. Residue His-76 coordinates heme. The Mitochondrial matrix portion of the chain corresponds to Glu-86 to Arg-95. Tyr-88 is a binding site for a ubiquinone. A helical membrane pass occupies residues Ile-96–Phe-120.

Part of an enzyme complex containing four subunits: a flavoprotein, an iron-sulfur protein, plus two membrane-anchoring proteins. Heme serves as cofactor.

It is found in the mitochondrion inner membrane. It functions in the pathway carbohydrate metabolism; tricarboxylic acid cycle. Functionally, membrane-anchoring subunit of succinate dehydrogenase (SDH). In Reclinomonas americana, this protein is Succinate dehydrogenase membrane anchor subunit (SDH4).